The sequence spans 177 residues: ATP synthase subunit delta (177 aa).

It belongs to the ATPase delta chain family. F-type ATPases have 2 components, F(1) - the catalytic core - and F(0) - the membrane proton channel. F(1) has five subunits: alpha(3), beta(3), gamma(1), delta(1), epsilon(1). F(0) has three main subunits: a(1), b(2) and c(10-14). The alpha and beta chains form an alternating ring which encloses part of the gamma chain. F(1) is attached to F(0) by a central stalk formed by the gamma and epsilon chains, while a peripheral stalk is formed by the delta and b chains.

It is found in the cell inner membrane. Its function is as follows. F(1)F(0) ATP synthase produces ATP from ADP in the presence of a proton or sodium gradient. F-type ATPases consist of two structural domains, F(1) containing the extramembraneous catalytic core and F(0) containing the membrane proton channel, linked together by a central stalk and a peripheral stalk. During catalysis, ATP synthesis in the catalytic domain of F(1) is coupled via a rotary mechanism of the central stalk subunits to proton translocation. This protein is part of the stalk that links CF(0) to CF(1). It either transmits conformational changes from CF(0) to CF(1) or is implicated in proton conduction. This chain is ATP synthase subunit delta, found in Shewanella baltica (strain OS223).